The following is a 234-amino-acid chain: MIELWPAIDLIGSTSVRLTEGKYDSEEKMSRSAEESIAYYSQFECVNRIHIVDLIGAKAQHAREFDYIKSLRRLTTKDIEVGGGIRTKSQIMDYFAAGINYCIVGTKGIQDTDWLKEMAHTFPGRIYLSVDAYGEDIKVNGWEEDTELNLFSFVRRLSDIPLGGIIYTDIAKDGKMSGPNFELTGQLVKATTIPVIASGGIRHQQDIQRLASLNVHAAIIGKAAHQASFWEGLK.

Residue Asp9 is the Proton acceptor of the active site. The active-site Proton donor is Asp131.

It belongs to the HisA/HisF family.

Its subcellular location is the cytoplasm. It catalyses the reaction 1-(5-phospho-beta-D-ribosyl)-5-[(5-phospho-beta-D-ribosylamino)methylideneamino]imidazole-4-carboxamide = 5-[(5-phospho-1-deoxy-D-ribulos-1-ylimino)methylamino]-1-(5-phospho-beta-D-ribosyl)imidazole-4-carboxamide. It participates in amino-acid biosynthesis; L-histidine biosynthesis; L-histidine from 5-phospho-alpha-D-ribose 1-diphosphate: step 4/9. This chain is 1-(5-phosphoribosyl)-5-[(5-phosphoribosylamino)methylideneamino] imidazole-4-carboxamide isomerase, found in Staphylococcus aureus (strain NCTC 8325 / PS 47).